The chain runs to 87 residues: Large ribosomal subunit protein bL31B (87 aa).

Belongs to the bacterial ribosomal protein bL31 family. Type B subfamily. As to quaternary structure, part of the 50S ribosomal subunit.

The chain is Large ribosomal subunit protein bL31B from Latilactobacillus sakei subsp. sakei (strain 23K) (Lactobacillus sakei subsp. sakei).